The sequence spans 110 residues: Large ribosomal subunit protein uL22 (110 aa).

Belongs to the universal ribosomal protein uL22 family. In terms of assembly, part of the 50S ribosomal subunit.

In terms of biological role, this protein binds specifically to 23S rRNA; its binding is stimulated by other ribosomal proteins, e.g. L4, L17, and L20. It is important during the early stages of 50S assembly. It makes multiple contacts with different domains of the 23S rRNA in the assembled 50S subunit and ribosome. The globular domain of the protein is located near the polypeptide exit tunnel on the outside of the subunit, while an extended beta-hairpin is found that lines the wall of the exit tunnel in the center of the 70S ribosome. This chain is Large ribosomal subunit protein uL22, found in Shewanella baltica (strain OS223).